Here is a 156-residue protein sequence, read N- to C-terminus: Small ribosomal subunit protein uS7 (156 aa).

Belongs to the universal ribosomal protein uS7 family. Part of the 30S ribosomal subunit. Contacts proteins S9 and S11.

One of the primary rRNA binding proteins, it binds directly to 16S rRNA where it nucleates assembly of the head domain of the 30S subunit. Is located at the subunit interface close to the decoding center, probably blocks exit of the E-site tRNA. The sequence is that of Small ribosomal subunit protein uS7 from Rhodopseudomonas palustris (strain BisA53).